A 298-amino-acid polypeptide reads, in one-letter code: Protoheme IX farnesyltransferase (298 aa).

Helical transmembrane passes span valine 16–proline 36, alanine 45–leucine 65, valine 93–isoleucine 113, threonine 114–lysine 134, isoleucine 141–glycine 161, serine 172–phenylalanine 192, isoleucine 218–serine 238, phenylalanine 241–leucine 261, and isoleucine 277–valine 297.

It belongs to the UbiA prenyltransferase family. Protoheme IX farnesyltransferase subfamily.

The protein localises to the cell inner membrane. The catalysed reaction is heme b + (2E,6E)-farnesyl diphosphate + H2O = Fe(II)-heme o + diphosphate. It participates in porphyrin-containing compound metabolism; heme O biosynthesis; heme O from protoheme: step 1/1. In terms of biological role, converts heme B (protoheme IX) to heme O by substitution of the vinyl group on carbon 2 of heme B porphyrin ring with a hydroxyethyl farnesyl side group. This chain is Protoheme IX farnesyltransferase, found in Xanthomonas axonopodis pv. citri (strain 306).